Consider the following 285-residue polypeptide: Bifunctional protein FolD (285 aa).

NADP(+) is bound by residues 165-167 (GRS) and S190.

The protein belongs to the tetrahydrofolate dehydrogenase/cyclohydrolase family. As to quaternary structure, homodimer.

The enzyme catalyses (6R)-5,10-methylene-5,6,7,8-tetrahydrofolate + NADP(+) = (6R)-5,10-methenyltetrahydrofolate + NADPH. It carries out the reaction (6R)-5,10-methenyltetrahydrofolate + H2O = (6R)-10-formyltetrahydrofolate + H(+). Its pathway is one-carbon metabolism; tetrahydrofolate interconversion. Functionally, catalyzes the oxidation of 5,10-methylenetetrahydrofolate to 5,10-methenyltetrahydrofolate and then the hydrolysis of 5,10-methenyltetrahydrofolate to 10-formyltetrahydrofolate. This chain is Bifunctional protein FolD, found in Burkholderia pseudomallei (strain 1710b).